Consider the following 480-residue polypeptide: UDP-N-acetylmuramoylalanine--D-glutamate ligase (480 aa).

127–133 serves as a coordination point for ATP; that stretch reads GTNGKTT.

This sequence belongs to the MurCDEF family.

It is found in the cytoplasm. The catalysed reaction is UDP-N-acetyl-alpha-D-muramoyl-L-alanine + D-glutamate + ATP = UDP-N-acetyl-alpha-D-muramoyl-L-alanyl-D-glutamate + ADP + phosphate + H(+). It participates in cell wall biogenesis; peptidoglycan biosynthesis. Cell wall formation. Catalyzes the addition of glutamate to the nucleotide precursor UDP-N-acetylmuramoyl-L-alanine (UMA). The polypeptide is UDP-N-acetylmuramoylalanine--D-glutamate ligase (Tropheryma whipplei (strain Twist) (Whipple's bacillus)).